A 313-amino-acid polypeptide reads, in one-letter code: Methionyl-tRNA formyltransferase (313 aa).

113 to 116 (SLLP) contributes to the (6S)-5,6,7,8-tetrahydrofolate binding site.

Belongs to the Fmt family.

The enzyme catalyses L-methionyl-tRNA(fMet) + (6R)-10-formyltetrahydrofolate = N-formyl-L-methionyl-tRNA(fMet) + (6S)-5,6,7,8-tetrahydrofolate + H(+). Its function is as follows. Attaches a formyl group to the free amino group of methionyl-tRNA(fMet). The formyl group appears to play a dual role in the initiator identity of N-formylmethionyl-tRNA by promoting its recognition by IF2 and preventing the misappropriation of this tRNA by the elongation apparatus. In Francisella tularensis subsp. tularensis (strain FSC 198), this protein is Methionyl-tRNA formyltransferase.